The chain runs to 999 residues: Signal peptide, CUB and EGF-like domain-containing protein 2 (999 aa).

An N-terminal signal peptide occupies residues 1-31 (MGVAGRNRPGAAWAVLLLLLLLPPLLLLAGA). Residues 45 to 85 (DVDECAQGLDDCHADALCQNTPTSYKCSCKPGYQGEGRQCE) enclose the EGF-like 1; calcium-binding domain. 6 disulfide bridges follow: Cys49/Cys62, Cys56/Cys71, Cys73/Cys84, Cys90/Cys102, Cys98/Cys111, and Cys113/Cys126. The EGF-like 2; calcium-binding domain occupies 86-127 (DIDECGNELNGGCVHDCLNIPGNYRCTCFDGFMLAHDGHNCL). In terms of domain architecture, EGF-like 3; calcium-binding spans 128 to 168 (DVDECLENNGGCQHTCVNVMGSYECCCKEGFFLSDNQHTCI). 3 consecutive EGF-like domains span residues 177-213 (CMNK…QRDC), 217-252 (CNHG…GRSC), and 286-321 (CAVN…GKTC). The EGF-like 7; calcium-binding domain occupies 323–363 (DIDECQTRNGGCDHFCKNIVGSFDCGCKKGFKLLTDEKSCQ). The EGF-like 8; calcium-binding domain occupies 364–402 (DVDECSLDRTCDHSCINHPGTFACACNRGYTLYGFTHCG). 6 cysteine pairs are disulfide-bonded: Cys368/Cys378, Cys374/Cys387, Cys389/Cys401, Cys407/Cys418, Cys414/Cys427, and Cys429/Cys442. The EGF-like 9; calcium-binding domain occupies 403–443 (DTNECSINNGGCQQVCVNTVGSYECQCHPGYKLHWNKKDCV). Asn659 is a glycosylation site (N-linked (GlcNAc...) asparagine). A disulfide bridge connects residues Cys809 and Cys835. Positions 809–921 (CGGELGDFTG…RGFQVPYVTY (113 aa)) constitute a CUB domain. The interval 847 to 856 (ILIVVPEIFL) is interaction with the cholesterol-anchor of SHH. Cys862 and Cys883 are oxidised to a cystine.

Forms homooligomers. Forms heterooligomers with SCUBE1. Forms heterooligomers with SCUBE3. Interacts with SHH via the cholesterol anchor of the dually lipid-modified SHH (ShhNp). Interacts with PTCH1. Interacts with VEGFR2. N-glycosylated. In terms of tissue distribution, expressed in a broad spectrum of adult tissues.

The protein resides in the secreted. The protein localises to the cell surface. In terms of biological role, lipid-binding protein required for SHH long-range signaling by binding to the dually lipid-modified SHH (ShhNp) and by promoting ShhNp mobilization, solubilization and release from the cell membrane. Acts by enhancing the proteolytic processing (shedding) of the lipid-modified N- and C- terminal of ShhNp at the cell surface. Synergizes with DISP1 to increase SHH secretion. Probable cell surface coreceptor for VEGFR2 involved in VEGFR2-mediated angiogenesis. The chain is Signal peptide, CUB and EGF-like domain-containing protein 2 from Homo sapiens (Human).